The chain runs to 270 residues: Fibroblast growth factor 5 (270 aa).

A signal peptide spans 1-20 (MSLSFLLLLFLSHLILSAWA). The tract at residues 26–83 (LAPKGQPGPAATGRNPAGASSSRSSRGTTSSSSSSVSSSHSASLGNQGSGLEQSSFQW) is disordered. Over residues 43–68 (GASSSRSSRGTTSSSSSSVSSSHSAS) the composition is skewed to low complexity. The segment covering 69–83 (LGNQGSGLEQSSFQW) has biased composition (polar residues). N-linked (GlcNAc...) asparagine glycosylation is present at Asn112. The segment at 236–257 (PEKKKPPSPVKPKVPLSAPRKS) is disordered.

This sequence belongs to the heparin-binding growth factors family. Interacts with FGFR1 and FGFR2. Affinity between fibroblast growth factors (FGFs) and their receptors is increased by heparan sulfate glycosaminoglycans that function as coreceptors. As to expression, expressed in skin.

The protein localises to the secreted. Functionally, plays an important role in the regulation of cell proliferation and cell differentiation. Required for normal regulation of the hair growth cycle. Functions as an inhibitor of hair elongation by promoting progression from anagen, the growth phase of the hair follicle, into catagen the apoptosis-induced regression phase. The sequence is that of Fibroblast growth factor 5 (FGF5) from Felis catus (Cat).